The primary structure comprises 38 residues: Alpha-amylase (38 aa).

The protein belongs to the glycosyl hydrolase 13 family. In terms of assembly, monomer. The cofactor is Ca(2+). It depends on chloride as a cofactor. As to expression, expressed by the venom gland.

The protein localises to the secreted. The enzyme catalyses Endohydrolysis of (1-&gt;4)-alpha-D-glucosidic linkages in polysaccharides containing three or more (1-&gt;4)-alpha-linked D-glucose units.. In Tityus serrulatus (Brazilian scorpion), this protein is Alpha-amylase.